Reading from the N-terminus, the 168-residue chain is Phosphopantetheine adenylyltransferase (168 aa).

Residue T13 participates in substrate binding. Residues T13–F14 and H21 contribute to the ATP site. Positions 45, 78, and 92 each coordinate substrate. ATP is bound by residues G93 to R95, E103, and T128 to S134.

It belongs to the bacterial CoaD family. Homohexamer. The cofactor is Mg(2+).

It is found in the cytoplasm. It catalyses the reaction (R)-4'-phosphopantetheine + ATP + H(+) = 3'-dephospho-CoA + diphosphate. Its pathway is cofactor biosynthesis; coenzyme A biosynthesis; CoA from (R)-pantothenate: step 4/5. Functionally, reversibly transfers an adenylyl group from ATP to 4'-phosphopantetheine, yielding dephospho-CoA (dPCoA) and pyrophosphate. The chain is Phosphopantetheine adenylyltransferase from Wolbachia pipientis subsp. Culex pipiens (strain wPip).